The sequence spans 687 residues: Macrolide export ATP-binding/permease protein MacB (687 aa).

Residues 6–244 (LKLAAVTRRF…LAEAGVDAAE (239 aa)) form the ABC transporter domain. 42–49 (GASGSGKS) is an ATP binding site. The span at 246–256 (AEASEAAVGES) shows a compositional bias: low complexity. The tract at residues 246 to 281 (AEASEAAVGESPTRNRHDTPAPPAAVDTDPHVDTGT) is disordered. The next 4 helical transmembrane spans lie at 312–332 (LLTMLGIIIGITSVVSIVAIG), 560–580 (LTLLLSLIAVISLVVGGIGVM), 617–637 (LVCLLGGTIGIALSFGLGALF), and 650–670 (AGAIVTAFVCSTLTGVIFGFM).

This sequence belongs to the ABC transporter superfamily. Macrolide exporter (TC 3.A.1.122) family. Homodimer.

It localises to the cell inner membrane. Functionally, non-canonical ABC transporter that contains transmembrane domains (TMD), which form a pore in the inner membrane, and an ATP-binding domain (NBD), which is responsible for energy generation. Confers resistance against macrolides. The chain is Macrolide export ATP-binding/permease protein MacB from Burkholderia lata (strain ATCC 17760 / DSM 23089 / LMG 22485 / NCIMB 9086 / R18194 / 383).